Reading from the N-terminus, the 359-residue chain is Mannose-1-phosphate guanylyltransferase (359 aa).

This sequence belongs to the transferase hexapeptide repeat family.

The catalysed reaction is alpha-D-mannose 1-phosphate + GTP + H(+) = GDP-alpha-D-mannose + diphosphate. It functions in the pathway cell wall biogenesis. It participates in nucleotide-sugar biosynthesis; GDP-alpha-D-mannose biosynthesis; GDP-alpha-D-mannose from alpha-D-mannose 1-phosphate (GTP route): step 1/1. Catalyzes the formation of GDP-mannose from D-mannose-1-phosphate and GTP. Plays an important role in the synthesis of different glycoconjugates which are responsible for cell wall structure, virulence and immunomodulatory activity of M.tuberculosis. This Mycobacterium tuberculosis (strain ATCC 25618 / H37Rv) protein is Mannose-1-phosphate guanylyltransferase.